A 494-amino-acid chain; its full sequence is Tripartite motif-containing protein 5 (494 aa).

At alanine 2 the chain carries N-acetylalanine. Residues 15-59 (CPICLELLTEPLSLDCGHSFCQACITANHKESTPHQGERSCPLCR) form an RING-type zinc finger. Residue serine 86 is modified to Phosphoserine. The B box-type zinc-finger motif lies at 91–132 (QKVGHCARHGEKLLLFCEQDGNVICWLCERSQEHRGHHTFLV). 4 residues coordinate Zn(2+): cysteine 96, histidine 99, cysteine 118, and histidine 124. Residues 131–223 (LVEEVAEKYQ…RLVQSESDMA (93 aa)) are a coiled coil. The interval 186–199 (FKQLRDILDCEESK) is required for interaction with GABARAP and for autophagy. Residues 280 to 494 (PDLKGMLQAF…LPMTLCSPSS (215 aa)) form the B30.2/SPRY domain.

It belongs to the TRIM/RBCC family. As to quaternary structure, can form homodimers and homotrimers. In addition to lower-order dimerization, also exhibits a higher-order multimerization and both low- and high-order multimerizations are essential for its restriction activity. Interacts with BTBD1 and BTBD2. Interacts with PSMC4, PSMC5, PSMD7 and HSPA8/HSC70. Interacts (via B30.2/SPRY domain) with HSPA1A/B. Interacts with PSMC2, MAP3K7/TAK1, TAB2 and TAB3. Interacts with SQSTM1. Interacts with TRIM6 and TRIM34. Interacts with ULK1 (phosphorylated form), GABARAP, GABARAPL1, GABARAPL2, MAP1LC3A, MAP1LC3C and BECN1. Post-translationally, degraded in a proteasome-independent fashion in the absence of viral infection but in a proteasome-dependent fashion following exposure to restriction sensitive virus. Autoubiquitinated in a RING finger- and UBE2D2-dependent manner. Monoubiquitinated by TRIM21. Deubiquitinated by Yersinia YopJ. Ubiquitination may not lead to proteasomal degradation.

Its subcellular location is the cytoplasm. It localises to the nucleus. The catalysed reaction is S-ubiquitinyl-[E2 ubiquitin-conjugating enzyme]-L-cysteine + [acceptor protein]-L-lysine = [E2 ubiquitin-conjugating enzyme]-L-cysteine + N(6)-ubiquitinyl-[acceptor protein]-L-lysine.. The protein operates within protein modification; protein ubiquitination. In terms of biological role, capsid-specific restriction factor that prevents infection from non-host-adapted retroviruses. Blocks viral replication early in the life cycle, after viral entry but before reverse transcription. In addition to acting as a capsid-specific restriction factor, also acts as a pattern recognition receptor that activates innate immune signaling in response to the retroviral capsid lattice. Binding to the viral capsid triggers its E3 ubiquitin ligase activity, and in concert with the heterodimeric ubiquitin conjugating enzyme complex UBE2V1-UBE2N (also known as UBC13-UEV1A complex) generates 'Lys-63'-linked polyubiquitin chains, which in turn are catalysts in the autophosphorylation of the MAP3K7/TAK1 complex (includes TAK1, TAB2, and TAB3). Activation of the MAP3K7/TAK1 complex by autophosphorylation results in the induction and expression of NF-kappa-B and MAPK-responsive inflammatory genes, thereby leading to an innate immune response in the infected cell. Plays a role in regulating autophagy through activation of autophagy regulator BECN1 by causing its dissociation from its inhibitors BCL2 and TAB2. This Saguinus oedipus (Cotton-top tamarin) protein is Tripartite motif-containing protein 5 (TRIM5).